The sequence spans 240 residues: MSGKPAYKRVLLKASGEALMGSQGFGIDVSVADRIANDIKQARSLGVEVGVVIGGGNIFRGVAVASKGGDRVTGDHMGMLATVINSLALRTSLHKIGVDSVVLSAIAMPEICESFSQRQATAYMDEGKVVIFAGGTGNPFFTTDSAAALRAAEIEADALLKGTQVDGIYSADPKKDPNATRFDSLTHKEVLDRGLAVMDTAAVALARENNIPIIVYSIHENGGLAEILQGKGRCTIVSDN.

13-16 (KASG) lines the ATP pocket. The tract at residues 21–26 (GSQGFG) is involved in allosteric activation by GTP. Gly55 provides a ligand contact to UMP. Residues Gly56 and Arg60 each contribute to the ATP site. UMP is bound by residues Asp75 and 136-143 (TGNPFFTT). Thr163, Gln164, Tyr169, and Asp172 together coordinate ATP.

Belongs to the UMP kinase family. In terms of assembly, homohexamer.

The protein localises to the cytoplasm. It carries out the reaction UMP + ATP = UDP + ADP. The protein operates within pyrimidine metabolism; CTP biosynthesis via de novo pathway; UDP from UMP (UMPK route): step 1/1. Allosterically activated by GTP. Inhibited by UTP. In terms of biological role, catalyzes the reversible phosphorylation of UMP to UDP. This Brucella anthropi (strain ATCC 49188 / DSM 6882 / CCUG 24695 / JCM 21032 / LMG 3331 / NBRC 15819 / NCTC 12168 / Alc 37) (Ochrobactrum anthropi) protein is Uridylate kinase.